We begin with the raw amino-acid sequence, 306 residues long: Acetyl-coenzyme A carboxylase carboxyl transferase subunit beta (306 aa).

The CoA carboxyltransferase N-terminal domain maps to leucine 27–proline 296. Cysteine 31, cysteine 34, cysteine 50, and cysteine 53 together coordinate Zn(2+). The segment at cysteine 31–cysteine 53 adopts a C4-type zinc-finger fold.

It belongs to the AccD/PCCB family. As to quaternary structure, acetyl-CoA carboxylase is a heterohexamer composed of biotin carboxyl carrier protein (AccB), biotin carboxylase (AccC) and two subunits each of ACCase subunit alpha (AccA) and ACCase subunit beta (AccD). Zn(2+) is required as a cofactor.

It is found in the cytoplasm. The enzyme catalyses N(6)-carboxybiotinyl-L-lysyl-[protein] + acetyl-CoA = N(6)-biotinyl-L-lysyl-[protein] + malonyl-CoA. It participates in lipid metabolism; malonyl-CoA biosynthesis; malonyl-CoA from acetyl-CoA: step 1/1. Functionally, component of the acetyl coenzyme A carboxylase (ACC) complex. Biotin carboxylase (BC) catalyzes the carboxylation of biotin on its carrier protein (BCCP) and then the CO(2) group is transferred by the transcarboxylase to acetyl-CoA to form malonyl-CoA. The sequence is that of Acetyl-coenzyme A carboxylase carboxyl transferase subunit beta from Pseudomonas savastanoi pv. phaseolicola (strain 1448A / Race 6) (Pseudomonas syringae pv. phaseolicola (strain 1448A / Race 6)).